A 1942-amino-acid chain; its full sequence is Probable helicase with zinc finger domain (1942 aa).

The C3H1-type zinc-finger motif lies at 178–206; sequence SEEYTLCKRFLEQGICRYGAQCTSAHSQE. Ser-248 carries the phosphoserine modification. 668–675 is a binding site for ATP; the sequence is GPYGTGKT. The DEAA box motif lies at 794–797; that stretch reads DEAA. Residues 1117-1127 are compositionally biased toward polar residues; the sequence is SGSTNKQQQSP. Residues 1117 to 1141 are disordered; that stretch reads SGSTNKQQQSPPKGKSLHHTQNDHF. Position 1163 is a phosphothreonine (Thr-1163). An Omega-N-methylarginine modification is found at Arg-1245. 4 disordered regions span residues 1246–1345, 1386–1429, 1527–1552, and 1608–1637; these read GSPI…INLP, NLPE…GPNN, QGSA…GLHQ, and RQVQ…FNDN. 2 stretches are compositionally biased toward basic and acidic residues: residues 1268 to 1281 and 1292 to 1308; these read HQEK…RNGK and NKIR…KQVD. The segment covering 1399–1412 has biased composition (low complexity); sequence NQVVQQQSQLNQQP. Ser-1614 is subject to Phosphoserine. Over residues 1623-1636 the composition is skewed to low complexity; that stretch reads SSTDHSSHFSNFND. Phosphoserine is present on residues Ser-1645, Ser-1738, Ser-1741, and Ser-1766. Disordered stretches follow at residues 1729-1779, 1792-1843, and 1870-1942; these read FHPL…TPQD, NQSS…PEDQ, and MPNK…SYFK. Low complexity predominate over residues 1731–1745; the sequence is PLSSRTVSSSSLPSL. Polar residues-rich tracts occupy residues 1761 to 1779 and 1792 to 1825; these read RISS…TPQD and NQSS…SRTA. Composition is skewed to low complexity over residues 1876–1888 and 1920–1942; these read AESA…QSSA and LSLF…SYFK.

The protein belongs to the DNA2/NAM7 helicase family. Interacts with SMYD2. Interacts with POLR2A. Interacts with SMYD3; the interaction may bridge SMYD3 and RNA polymerase II. As to expression, expressed predominantly in thymus and brain. Expression is down-regulated in 28 of 95 tested cancer cell lines.

It localises to the nucleus. Functionally, may act as a helicase that plays a role in RNA metabolism in multiple tissues and organs within the developing embryo. This Homo sapiens (Human) protein is Probable helicase with zinc finger domain (HELZ).